The chain runs to 690 residues: Methionine--tRNA ligase (690 aa).

The 'HIGH' region signature appears at 12–22 (PYANGSIHLGH). Cysteine 143, cysteine 146, cysteine 156, and cysteine 159 together coordinate Zn(2+). A 'KMSKS' region motif is present at residues 328 to 332 (KMSKS). Lysine 331 is a binding site for ATP. A tRNA-binding domain is found at 582 to 690 (DFAKVDLRIA…SGAEPGMKVK (109 aa)).

The protein belongs to the class-I aminoacyl-tRNA synthetase family. MetG type 1 subfamily. In terms of assembly, homodimer. The cofactor is Zn(2+).

The protein localises to the cytoplasm. The catalysed reaction is tRNA(Met) + L-methionine + ATP = L-methionyl-tRNA(Met) + AMP + diphosphate. Its function is as follows. Is required not only for elongation of protein synthesis but also for the initiation of all mRNA translation through initiator tRNA(fMet) aminoacylation. The polypeptide is Methionine--tRNA ligase (Thiobacillus denitrificans (strain ATCC 25259 / T1)).